The following is a 149-amino-acid chain: Arginine repressor (149 aa).

Belongs to the ArgR family.

The protein resides in the cytoplasm. The protein operates within amino-acid biosynthesis; L-arginine biosynthesis [regulation]. In terms of biological role, regulates arginine biosynthesis genes. The sequence is that of Arginine repressor from Listeria monocytogenes serotype 4b (strain F2365).